Reading from the N-terminus, the 1311-residue chain is Stress response protein NST1 (1311 aa).

5 disordered regions span residues 1–226, 308–379, 478–521, 542–576, and 613–1083; these read MKGN…QEER, LGPT…RQRP, NGNN…VQTN, SASADDGSYQDHGQESHAKQHRHLQDSMTEEQRME, and ELAQ…NLEE. Residues 8–27 are compositionally biased toward low complexity; that stretch reads PAVASQPTSPASPTPSKGTS. The span at 46–58 shows a compositional bias: polar residues; it reads SVETPQPSPTVSA. Low complexity predominate over residues 68–86; that stretch reads GQPPSTAPTAPSGSNASGG. Residues 93–103 show a composition bias toward basic residues; it reads NRKKAKRRAKL. Polar residues predominate over residues 116-133; the sequence is DNLSNGVAAHSASSSLPK. The span at 213 to 226 shows a compositional bias: basic and acidic residues; the sequence is SKEKIWNTSSQEER. 2 stretches are compositionally biased toward acidic residues: residues 343-372 and 491-518; these read GDDEDDDGEDEYSEEELDDDEDYSDDEEPE and PEDDEEYEDEEEEEEYDSQDEEYDEEEV. Residues 450-521 adopt a coiled-coil conformation; sequence IEMMEQLAER…EYDEEEVQTN (72 aa). The stretch at 599-795 forms a coiled coil; sequence REKVAKERQE…SQKATTLANV (197 aa). Basic and acidic residues-rich tracts occupy residues 613–682 and 689–786; these read ELAQ…NEER and QRKA…ERAS. 2 stretches are compositionally biased toward low complexity: residues 805-829 and 891-922; these read QSQAPNPAPALPQSQQASVASPQLP and SKGSSSQGQSLHSQATSPLGTSLPTSTSLPTP. Residues 923–933 are compositionally biased toward pro residues; the sequence is FGMPHPPPNQH. The segment covering 934–945 has biased composition (low complexity); sequence YPPGIGPLNAPP. Positions 960–975 are enriched in polar residues; sequence MYQQSPFGFRQATQQH. The span at 984 to 994 shows a compositional bias: gly residues; it reads IPMGPGRGLGH. Positions 1026–1038 are enriched in polar residues; sequence PLSSHSRQASANF. Over residues 1041 to 1052 the composition is skewed to low complexity; it reads PIAATPIARPTP.

Belongs to the NST1 family.

It localises to the cytoplasm. Its function is as follows. May act as a negative regulator of salt tolerance. This is Stress response protein NST1 (NST1) from Pyricularia oryzae (strain 70-15 / ATCC MYA-4617 / FGSC 8958) (Rice blast fungus).